We begin with the raw amino-acid sequence, 692 residues long: Elongation factor G (692 aa).

The tr-type G domain maps to 8-282 (DKTRNIGIMA…AVLDYLPAPT (275 aa)). Residues 17-24 (AHIDAGKT), 81-85 (DTPGH), and 135-138 (NKMD) each bind GTP.

The protein belongs to the TRAFAC class translation factor GTPase superfamily. Classic translation factor GTPase family. EF-G/EF-2 subfamily.

The protein resides in the cytoplasm. In terms of biological role, catalyzes the GTP-dependent ribosomal translocation step during translation elongation. During this step, the ribosome changes from the pre-translocational (PRE) to the post-translocational (POST) state as the newly formed A-site-bound peptidyl-tRNA and P-site-bound deacylated tRNA move to the P and E sites, respectively. Catalyzes the coordinated movement of the two tRNA molecules, the mRNA and conformational changes in the ribosome. The protein is Elongation factor G of Bacillus pumilus (strain SAFR-032).